A 349-amino-acid polypeptide reads, in one-letter code: tRNA pseudouridine synthase D (349 aa).

Phe-27 provides a ligand contact to substrate. The Nucleophile role is filled by Asp-80. Asn-129 is a binding site for substrate. The region spanning Gly-155–Leu-303 is the TRUD domain. Residue Phe-329 participates in substrate binding.

Belongs to the pseudouridine synthase TruD family.

It catalyses the reaction uridine(13) in tRNA = pseudouridine(13) in tRNA. Responsible for synthesis of pseudouridine from uracil-13 in transfer RNAs. This is tRNA pseudouridine synthase D from Escherichia coli O45:K1 (strain S88 / ExPEC).